A 553-amino-acid chain; its full sequence is Membrane protein insertase YidC (553 aa).

The next 5 helical transmembrane spans lie at 7 to 24, 365 to 385, 435 to 455, 474 to 494, and 509 to 529; these read VLWVIFFMSAVMLYDNWQ, WGWAIVLLTLLIKAVFFPLSA, LPVVIQIPVFISLYWVLLASV, PYFILPVLMAVSMYVQTSLNP, and PIAFSVMFFFFPAGLVLYYVV.

This sequence belongs to the OXA1/ALB3/YidC family. Type 1 subfamily. In terms of assembly, interacts with the Sec translocase complex via SecD. Specifically interacts with transmembrane segments of nascent integral membrane proteins during membrane integration.

The protein resides in the cell inner membrane. Required for the insertion and/or proper folding and/or complex formation of integral membrane proteins into the membrane. Involved in integration of membrane proteins that insert both dependently and independently of the Sec translocase complex, as well as at least some lipoproteins. Aids folding of multispanning membrane proteins. This Burkholderia multivorans (strain ATCC 17616 / 249) protein is Membrane protein insertase YidC.